Consider the following 667-residue polypeptide: Probable E3 ubiquitin-protein ligase HIP1 (667 aa).

Disordered stretches follow at residues Asn142–Ala163 and Thr285–Arg311. Over residues Gly288–Ser309 the composition is skewed to low complexity. The segment at Cys620 to Lys661 adopts an RING-type; atypical zinc-finger fold.

This sequence belongs to the RING-type zinc finger family. As to quaternary structure, interacts with HAL3.

The catalysed reaction is S-ubiquitinyl-[E2 ubiquitin-conjugating enzyme]-L-cysteine + [acceptor protein]-L-lysine = [E2 ubiquitin-conjugating enzyme]-L-cysteine + N(6)-ubiquitinyl-[acceptor protein]-L-lysine.. It functions in the pathway protein modification; protein ubiquitination. In terms of biological role, probable E3 ubiquitin-protein ligase that functions downstream of HAL3 and is required for HAL3-regulated plant growth. Activation of HIP1 by HAL3 may lead to the degradation of cell cycle suppressors, resulting in enhancement of cell division and plant growth. The chain is Probable E3 ubiquitin-protein ligase HIP1 (HIP1) from Oryza sativa subsp. japonica (Rice).